Reading from the N-terminus, the 202-residue chain is Ribonuclease HII (202 aa).

The RNase H type-2 domain maps to 12–201 (LLIAGVDEAG…VRQLKLFIPE (190 aa)). Aspartate 18, glutamate 19, and aspartate 110 together coordinate a divalent metal cation.

Belongs to the RNase HII family. Requires Mn(2+) as cofactor. Mg(2+) serves as cofactor.

The protein resides in the cytoplasm. The catalysed reaction is Endonucleolytic cleavage to 5'-phosphomonoester.. Endonuclease that specifically degrades the RNA of RNA-DNA hybrids. This chain is Ribonuclease HII, found in Coxiella burnetii (strain CbuG_Q212) (Coxiella burnetii (strain Q212)).